The chain runs to 118 residues: Heavy metal-associated isoprenylated plant protein 12 (118 aa).

Residues 1-65 (MQVVVLKLDV…KICHTEFISV (65 aa)) form the HMA domain. Residues 68-87 (VKEPEKKKPDDPKKPETKPP) are disordered. The span at 69 to 86 (KEPEKKKPDDPKKPETKP) shows a compositional bias: basic and acidic residues. Cysteine methyl ester is present on Cys-115. Cys-115 is lipidated: S-farnesyl cysteine. Positions 116 to 118 (VTS) are cleaved as a propeptide — removed in mature form.

Belongs to the HIPP family.

Probable heavy-metal-binding protein. In Arabidopsis thaliana (Mouse-ear cress), this protein is Heavy metal-associated isoprenylated plant protein 12.